We begin with the raw amino-acid sequence, 249 residues long: ATP synthase subunit a, chloroplastic (249 aa).

A run of 5 helical transmembrane segments spans residues 40 to 60 (QVLITSWVVIAILLGSAVLAV), 97 to 117 (VPFIGTLFLFIFVSNWSGALL), 136 to 156 (INTTVALALLTSVAYFYAGLS), 201 to 221 (LVVVVLVSLVPLVVPIPVMFL), and 222 to 242 (GLFTSGIQALIFATLAAAYIG).

The protein belongs to the ATPase A chain family. In terms of assembly, F-type ATPases have 2 components, CF(1) - the catalytic core - and CF(0) - the membrane proton channel. CF(1) has five subunits: alpha(3), beta(3), gamma(1), delta(1), epsilon(1). CF(0) has four main subunits: a, b, b' and c.

It is found in the plastid. Its subcellular location is the chloroplast thylakoid membrane. In terms of biological role, key component of the proton channel; it plays a direct role in the translocation of protons across the membrane. The polypeptide is ATP synthase subunit a, chloroplastic (Draba nemorosa (Woodland whitlowgrass)).